The sequence spans 474 residues: Glutamyl-tRNA(Gln) amidotransferase subunit A (474 aa).

Residues Lys76 and Ser151 each act as charge relay system in the active site. Catalysis depends on Ser175, which acts as the Acyl-ester intermediate.

Belongs to the amidase family. GatA subfamily. In terms of assembly, heterotrimer of A, B and C subunits.

The enzyme catalyses L-glutamyl-tRNA(Gln) + L-glutamine + ATP + H2O = L-glutaminyl-tRNA(Gln) + L-glutamate + ADP + phosphate + H(+). Allows the formation of correctly charged Gln-tRNA(Gln) through the transamidation of misacylated Glu-tRNA(Gln) in organisms which lack glutaminyl-tRNA synthetase. The reaction takes place in the presence of glutamine and ATP through an activated gamma-phospho-Glu-tRNA(Gln). This Chlorobium chlorochromatii (strain CaD3) protein is Glutamyl-tRNA(Gln) amidotransferase subunit A.